Consider the following 454-residue polypeptide: Death-associated protein kinase 3 (454 aa).

The region spanning 13–275 (YEMGEELGSG…IAQSLEHSWI (263 aa)) is the Protein kinase domain. ATP-binding positions include 19–27 (LGSGQFAIV) and lysine 42. A Phosphoserine; by autocatalysis modification is found at serine 50. Pyridone 6-binding residues include glutamate 94 and valine 96. Aspartate 139 (proton acceptor) is an active-site residue. The tract at residues 161–204 (DFGIAHKIEAGNEFKNIFGTPEFVAPEIVNYEPLGLEADMWSIG) is activation segment. A phosphothreonine mark is found at threonine 180 and threonine 225. At threonine 265 the chain carries Phosphothreonine; by autocatalysis and ROCK1. The residue at position 299 (threonine 299) is a Phosphothreonine; by autocatalysis, DAPK1 and ROCK1. Phosphothreonine; by autocatalysis is present on threonine 306. At serine 309 the chain carries Phosphoserine; by DAPK1. Residue serine 311 is modified to Phosphoserine; by autocatalysis and DAPK1. A phosphoserine; by DAPK1 mark is found at serine 312, serine 318, and serine 326. The interval 427 to 441 (VASEMRFVQDLVRAL) is leucine-zipper.

The protein belongs to the protein kinase superfamily. CAMK Ser/Thr protein kinase family. DAP kinase subfamily. As to quaternary structure, homooligomer in its kinase-active form (homotrimers and homodimers are reported); monomeric in its kinase-inactive form. Homodimerization is required for activation segment autophosphorylation. Isoform 1 and isoform 2 interact with myosin and PPP1R12A; interaction of isoform 1 with PPP1R12A is inhibited by RhoA dominant negative form. Interacts with NLK, DAXX, STAT3, RHOD (GTP-bound form) and TCP10L. Interacts with PAWR; the interaction is reported conflictingly: according to PubMed:17953487 does not interact with PAWR. Interacts with ULK1; may be a substrate of ULK1. Interacts with LUZP1; the interaction is likely to occur throughout the cell cycle and reduces the LUZP1-mediated suppression of MYL9 phosphorylation. Mg(2+) is required as a cofactor. In terms of processing, the phosphorylation status is critical for kinase activity, oligomerization and intracellular localization. Phosphorylation at Thr-180, Thr-225 and Thr-265 is essential for activity. The phosphorylated form is localized in the cytoplasm promoted by phosphorylation at Thr-299; nuclear translocation or retention is maximal when it is not phosphorylated. Phosphorylation increases the trimeric form, and its dephosphorylation favors a kinase-inactive monomeric form. Both isoform 1 and isoform 2 can undergo autophosphorylation. In terms of tissue distribution, widely expressed. Isoform 1 and isoform 2 are expressed in the bladder smooth muscle.

Its subcellular location is the nucleus. It localises to the PML body. The protein resides in the cytoplasm. The protein localises to the cytoskeleton. It is found in the microtubule organizing center. Its subcellular location is the centrosome. It localises to the chromosome. The protein resides in the centromere. The protein localises to the spindle. It is found in the midbody. The catalysed reaction is L-seryl-[protein] + ATP = O-phospho-L-seryl-[protein] + ADP + H(+). The enzyme catalyses L-threonyl-[protein] + ATP = O-phospho-L-threonyl-[protein] + ADP + H(+). A sequential activation is proposed: autophosphorylation at consensus sites is leading to dimerization of the catalytic domain stabilized by phosphorylation at Ser-50 and activation segment exchange (producing an active confirmation of both kinase modules in trans) followed by phosphorylation at Thr-180 in the activation segment and at other regulatory sites. Phosphorylation at Thr-180, Thr-225 and Thr-265 is essential for activity. Oligomerization is required for full enzymatic activity. Inhibited by pyridone-6 (K00225), a potent, ATP-competitive inhibitor. Serine/threonine kinase which is involved in the regulation of apoptosis, autophagy, transcription, translation and actin cytoskeleton reorganization. Involved in the regulation of smooth muscle contraction. Regulates both type I (caspase-dependent) apoptotic and type II (caspase-independent) autophagic cell deaths signal, depending on the cellular setting. Involved in regulation of starvation-induced autophagy. Regulates myosin phosphorylation in both smooth muscle and non-muscle cells. In smooth muscle, regulates myosin either directly by phosphorylating MYL12B and MYL9 or through inhibition of smooth muscle myosin phosphatase (SMPP1M) via phosphorylation of PPP1R12A; the inhibition of SMPP1M functions to enhance muscle responsiveness to Ca(2+) and promote a contractile state. Phosphorylates MYL12B in non-muscle cells leading to reorganization of actin cytoskeleton. Isoform 2 can phosphorylate myosin, PPP1R12A and MYL12B. Overexpression leads to condensation of actin stress fibers into thick bundles. Involved in actin filament focal adhesion dynamics. The function in both reorganization of actin cytoskeleton and focal adhesion dissolution is modulated by RhoD. Positively regulates canonical Wnt/beta-catenin signaling through interaction with NLK and TCF7L2. Phosphorylates RPL13A on 'Ser-77' upon interferon-gamma activation which is causing RPL13A release from the ribosome, RPL13A association with the GAIT complex and its subsequent involvement in transcript-selective translation inhibition. Enhances transcription from AR-responsive promoters in a hormone- and kinase-dependent manner. Involved in regulation of cell cycle progression and cell proliferation. May be a tumor suppressor. This Homo sapiens (Human) protein is Death-associated protein kinase 3 (DAPK3).